A 496-amino-acid polypeptide reads, in one-letter code: uncharacterized protein (496 aa).

13 consecutive transmembrane segments (helical) span residues 5-25 (LTAL…GFLA), 45-65 (FGGL…YTFL), 77-97 (VAFF…FFLP), 127-147 (LVAI…LSGI), 161-181 (VKFV…FSGI), 193-213 (ILVW…HFNG), 239-259 (IPWF…WAHA), 278-298 (FLPL…IAFL), 325-345 (FAYA…AIGA), 374-394 (MVFV…TALV), 396-416 (LQLL…VSLF), 424-444 (ATVI…ITQS), and 450-470 (EGFW…PLFV).

Belongs to the sodium:solute symporter (SSF) (TC 2.A.21) family.

It localises to the cell membrane. This is an uncharacterized protein from Bacillus subtilis (strain 168).